The primary structure comprises 295 residues: uncharacterized protein (295 aa).

The signal sequence occupies residues 1 to 19 (MFRKFLFIPLLIVTSLVKA). Positions 274–295 (KRNNPPLKNNNAKSKNSYETHK) are disordered. A compositionally biased stretch (low complexity) spans 276–288 (NNPPLKNNNAKSK).

This is an uncharacterized protein from Rickettsia typhi (strain ATCC VR-144 / Wilmington).